The following is a 146-amino-acid chain: Hemoglobin subunit beta-1/2 (146 aa).

N-acetylvaline is present on valine 1. Residues 2 to 146 (HLTPDEKNAV…VATALAHKYH (145 aa)) enclose the Globin domain. The residue at position 44 (serine 44) is a Phosphoserine. Residue lysine 59 is modified to N6-acetyllysine. Heme b is bound by residues histidine 63 and histidine 92. Cysteine 93 bears the S-nitrosocysteine mark. Position 144 is an N6-acetyllysine (lysine 144).

The protein belongs to the globin family. In terms of assembly, heterotetramer of two alpha chains and two beta chains. In terms of tissue distribution, red blood cells.

Functionally, involved in oxygen transport from the lung to the various peripheral tissues. The chain is Hemoglobin subunit beta-1/2 (HBB) from Otolemur crassicaudatus (Brown greater galago).